Reading from the N-terminus, the 164-residue chain is UPF0304 protein YE1336 (164 aa).

Belongs to the UPF0304 family.

The chain is UPF0304 protein YE1336 from Yersinia enterocolitica serotype O:8 / biotype 1B (strain NCTC 13174 / 8081).